Consider the following 493-residue polypeptide: Galactose-1-phosphate uridylyltransferase (493 aa).

This sequence belongs to the galactose-1-phosphate uridylyltransferase type 2 family.

The protein resides in the cytoplasm. It carries out the reaction alpha-D-galactose 1-phosphate + UDP-alpha-D-glucose = alpha-D-glucose 1-phosphate + UDP-alpha-D-galactose. Its pathway is carbohydrate metabolism; galactose metabolism. The polypeptide is Galactose-1-phosphate uridylyltransferase (Lactococcus lactis subsp. cremoris (strain MG1363)).